We begin with the raw amino-acid sequence, 133 residues long: MSANDTISDMLTRIRNACAVRQTTTQIPTTRMTRSIAQVLKDEGFIADFEEVGEGIKSQLVLSLKYKGKNRQPIITTLTRVSKPGLRVYSNSKDLPRVLGGIGIAIVSTSKGIMTDREARKQNVGGEVLCYIW.

The protein belongs to the universal ribosomal protein uS8 family. As to quaternary structure, part of the 30S ribosomal subunit. Contacts proteins S5 and S12.

Its function is as follows. One of the primary rRNA binding proteins, it binds directly to 16S rRNA central domain where it helps coordinate assembly of the platform of the 30S subunit. This is Small ribosomal subunit protein uS8 from Microcystis aeruginosa (strain NIES-843 / IAM M-2473).